Reading from the N-terminus, the 250-residue chain is Phosphoribosylaminoimidazole-succinocarboxamide synthase (250 aa).

Belongs to the SAICAR synthetase family.

It carries out the reaction 5-amino-1-(5-phospho-D-ribosyl)imidazole-4-carboxylate + L-aspartate + ATP = (2S)-2-[5-amino-1-(5-phospho-beta-D-ribosyl)imidazole-4-carboxamido]succinate + ADP + phosphate + 2 H(+). It participates in purine metabolism; IMP biosynthesis via de novo pathway; 5-amino-1-(5-phospho-D-ribosyl)imidazole-4-carboxamide from 5-amino-1-(5-phospho-D-ribosyl)imidazole-4-carboxylate: step 1/2. This Parasynechococcus marenigrum (strain WH8102) protein is Phosphoribosylaminoimidazole-succinocarboxamide synthase.